A 331-amino-acid chain; its full sequence is Glyceraldehyde-3-phosphate dehydrogenase, cytosolic (331 aa).

Residues 12 to 13 (RI), aspartate 34, and arginine 78 each bind NAD(+). D-glyceraldehyde 3-phosphate is bound by residues 149–151 (SCT), threonine 180, 209–210 (TG), and arginine 232. Cysteine 150 (nucleophile) is an active-site residue. Residue asparagine 314 coordinates NAD(+).

The protein belongs to the glyceraldehyde-3-phosphate dehydrogenase family. Homotetramer.

The protein resides in the cytoplasm. The enzyme catalyses D-glyceraldehyde 3-phosphate + phosphate + NAD(+) = (2R)-3-phospho-glyceroyl phosphate + NADH + H(+). It participates in carbohydrate degradation; glycolysis; pyruvate from D-glyceraldehyde 3-phosphate: step 1/5. This Trypanosoma brucei brucei protein is Glyceraldehyde-3-phosphate dehydrogenase, cytosolic.